A 1371-amino-acid polypeptide reads, in one-letter code: Pleckstrin homology-like domain family B member 1 (1371 aa).

The residue at position 51 (Ser-51) is a Phosphoserine. The 62-residue stretch at 64–125 (TVIGSAARDI…LTQGCMLCLG (62 aa)) folds into the FHA domain. Arg-131 carries the post-translational modification Asymmetric dimethylarginine. Residues 153-182 (GPTYNPGSAESESLVNGNHTAQPATRAPSA) form a disordered region. Positions 157–175 (NPGSAESESLVNGNHTAQP) are enriched in polar residues. 3 positions are modified to phosphoserine: Ser-192, Ser-220, and Ser-223. 2 disordered regions span residues 211 to 336 (AAGK…TDSP) and 368 to 573 (PSSG…RVPI). Composition is skewed to low complexity over residues 252-273 (SPAF…HSPS) and 296-312 (LQPP…SDSP). Phosphoserine is present on residues Ser-325 and Ser-335. Polar residues predominate over residues 368–377 (PSSGARSQPA). Residues Ser-382, Ser-405, Ser-431, Ser-445, Ser-463, Ser-472, Ser-491, and Ser-503 each carry the phosphoserine modification. Positions 464-477 (PSLSRRALSPLPAR) are enriched in low complexity. The span at 483–493 (KLSREVAESPR) shows a compositional bias: basic and acidic residues. Arg-514 carries the omega-N-methylarginine modification. Residues Ser-520 and Ser-522 each carry the phosphoserine modification. Phosphothreonine is present on Thr-524. Phosphoserine is present on residues Ser-535, Ser-541, Ser-553, Ser-557, Ser-565, Ser-580, Ser-585, and Ser-683. Positions 547-559 (GSLTGASPRQSPR) are enriched in polar residues. 2 disordered regions span residues 672–714 (ESGG…GAKH) and 942–1020 (GLAA…QNGT). 2 stretches are compositionally biased toward basic and acidic residues: residues 682–696 (ESME…KEEC) and 703–714 (QQEHEDAPGAKH). Residues 688-798 (DEENLKEECS…ETGIQKDRDK (111 aa)) adopt a coiled-coil conformation. Residues Ser-976 and Ser-1022 each carry the phosphoserine modification. Positions 976–997 (SPLPRTRSGPLPSSSGSSSSSS) are enriched in low complexity. The interval 1124–1143 (SMETSISTGGNSACSPDNMS) is disordered. The stretch at 1150–1216 (MGKIEEMEKM…QQLVEKEVKL (67 aa)) forms a coiled coil. The 104-residue stretch at 1261-1364 (SKVCRGYLIK…WMDVIVTGAE (104 aa)) folds into the PH domain.

This chain is Pleckstrin homology-like domain family B member 1 (Phldb1), found in Mus musculus (Mouse).